We begin with the raw amino-acid sequence, 670 residues long: MARITILPDILCNQIAAGEVVERPAAVAKELLENSIDAGARRISLSIADGGRKEIRVVDNGSGMHPDDALLALERHATSKIRSIEDLQAIGSLGFRGEALPSIAAVSRFELVTREPDAVAGTFIRVEGGVVREVRETGSPAGTRITVRDLFYNVPARRKFLRAADTETAYICDQFQRLAMAHHAVHFQLINRERTQYDFPGAASPEERAGQVLGAETLKRAIPFCVENASARLRGMVGTPDLQRANSHSLFVFVNGRPVWDRAVNRAILAAFESLIPRGKFPVAVLFLELDPLHVDVNVHPTKREVRFKHPGGVIDTVRGAIRDALCHLRPLHGSAAAAPRPFSETADQRAFRDSLVREGQLSFDRGRPLSRPPGFPSERWRERHRPDAEPPYPLLREPAPTENPRREAGSPPAAPADSLFDEGAAPQPDNPDTDFFAEPKRAAGGPASTHAPVTVDTAAFADAFQAFEAATHLHAGDVPALAELPVIGQLANTYILLEAPDGLILIDQHAAHERIIFDALSFPAGGPARQRLIRPAVIDLPPRDAAMLRRWLPLLEEIGVEIESFGGDSFVVHAVPAPLGECPPEGLVRELLASAIEGDDAPRWNVLGRLAKTAACHRAVRAGQRLRPEEIRLLLEGLDRTRFASTCPHGRPVWYKMTLSDVARLFQRT.

A disordered region spans residues 363–451; sequence SFDRGRPLSR…RAAGGPASTH (89 aa). Residues 379-389 are compositionally biased toward basic and acidic residues; it reads ERWRERHRPDA.

This sequence belongs to the DNA mismatch repair MutL/HexB family.

This protein is involved in the repair of mismatches in DNA. It is required for dam-dependent methyl-directed DNA mismatch repair. May act as a 'molecular matchmaker', a protein that promotes the formation of a stable complex between two or more DNA-binding proteins in an ATP-dependent manner without itself being part of a final effector complex. This chain is DNA mismatch repair protein MutL, found in Syntrophobacter fumaroxidans (strain DSM 10017 / MPOB).